A 231-amino-acid chain; its full sequence is Response regulator Rre1 (231 aa).

The Response regulatory domain occupies 6-123 (SLLLVDDEPG…ELEAIVRNLL (118 aa)). D56 bears the 4-aspartylphosphate mark. The region spanning 163–228 (PSPIKLDFTP…ELVRFALQHG (66 aa)) is the HTH luxR-type domain. Residues 187-206 (NKEIAAQLKTSVRNVEKYVS) constitute a DNA-binding region (H-T-H motif).

As to quaternary structure, interacts with histidine kinase Hik2; may accept phosphate from Hik2.

Functionally, member of at least 2 two-component regulatory systems Hik2/Rre1 and Hik34/Rre1. Responds to hyperosmotic stress, regulates expression of at least 24 genes including dnaK2 and hspA with Hik34 and sigB (sll0306), sll0528, slr1119, slr0852 and ssr3188 with Hik2. Responds to salt stress, regulates expression of at least 24 genes including adhA, dnaK2 and hspA with Hik34. Binds the adhA promoter. Phosphorylated by Hik2 in vitro. Phosphorylated protein has 10-fold higher affinity for DNA than unphosphorylated protein. The chain is Response regulator Rre1 from Synechocystis sp. (strain ATCC 27184 / PCC 6803 / Kazusa).